Here is a 179-residue protein sequence, read N- to C-terminus: Adenine phosphoribosyltransferase (179 aa).

It belongs to the purine/pyrimidine phosphoribosyltransferase family. As to quaternary structure, homodimer.

The protein localises to the cytoplasm. The catalysed reaction is AMP + diphosphate = 5-phospho-alpha-D-ribose 1-diphosphate + adenine. The protein operates within purine metabolism; AMP biosynthesis via salvage pathway; AMP from adenine: step 1/1. Catalyzes a salvage reaction resulting in the formation of AMP, that is energically less costly than de novo synthesis. This Mycolicibacterium gilvum (strain PYR-GCK) (Mycobacterium gilvum (strain PYR-GCK)) protein is Adenine phosphoribosyltransferase.